Here is a 171-residue protein sequence, read N- to C-terminus: Adenine phosphoribosyltransferase (171 aa).

This sequence belongs to the purine/pyrimidine phosphoribosyltransferase family. In terms of assembly, homodimer.

Its subcellular location is the cytoplasm. The catalysed reaction is AMP + diphosphate = 5-phospho-alpha-D-ribose 1-diphosphate + adenine. Its pathway is purine metabolism; AMP biosynthesis via salvage pathway; AMP from adenine: step 1/1. In terms of biological role, catalyzes a salvage reaction resulting in the formation of AMP, that is energically less costly than de novo synthesis. The sequence is that of Adenine phosphoribosyltransferase from Citrifermentans bemidjiense (strain ATCC BAA-1014 / DSM 16622 / JCM 12645 / Bem) (Geobacter bemidjiensis).